Consider the following 585-residue polypeptide: Type IV pilus assembly ATPase TfpB (585 aa).

346–351 (GSGKTT) serves as a coordination point for ATP. C476, C479, C511, and C514 together coordinate Zn(2+).

It belongs to the GSP E family.

It localises to the cytoplasm. In terms of biological role, ATPase component of the type IV pilus (T4P). Acts as a molecular motor to provide the energy that is required for biogenesis of the pilus and the extrusion of substrates generated in the cytoplasm. TfpB is required for optimal T4P extension and, consequently, efficient natural transformation. May play a role in initiating T4P extension. This Acinetobacter baylyi (strain ATCC 33305 / BD413 / ADP1) protein is Type IV pilus assembly ATPase TfpB.